The following is a 307-amino-acid chain: GTPase Era (307 aa).

One can recognise an Era-type G domain in the interval 17 to 186 (RCGFVAIVGR…LELIKPYLPE (170 aa)). The segment at 25–32 (GRPNVGKS) is G1. 25–32 (GRPNVGKS) lines the GTP pocket. Positions 51-55 (QTTRN) are G2. Positions 72 to 75 (DTPG) are G3. Residues 72–76 (DTPGF) and 133–136 (NKID) each bind GTP. The interval 133–136 (NKID) is G4. The segment at 165–167 (VSA) is G5. Residues 217 to 293 (LGEELPYAMN…FLKVWVKVKS (77 aa)) form the KH type-2 domain.

This sequence belongs to the TRAFAC class TrmE-Era-EngA-EngB-Septin-like GTPase superfamily. Era GTPase family. As to quaternary structure, monomer.

It localises to the cytoplasm. It is found in the cell inner membrane. Functionally, an essential GTPase that binds both GDP and GTP, with rapid nucleotide exchange. Plays a role in 16S rRNA processing and 30S ribosomal subunit biogenesis and possibly also in cell cycle regulation and energy metabolism. This is GTPase Era from Neisseria meningitidis serogroup B (strain ATCC BAA-335 / MC58).